A 515-amino-acid chain; its full sequence is Maturase K (515 aa).

This sequence belongs to the intron maturase 2 family. MatK subfamily.

It localises to the plastid. It is found in the chloroplast. Usually encoded in the trnK tRNA gene intron. Probably assists in splicing its own and other chloroplast group II introns. The polypeptide is Maturase K (Helonias bullata (Swamp pink)).